The following is a 266-amino-acid chain: Adaptin ear-binding coat-associated protein 2 (266 aa).

Disordered stretches follow at residues 165-198 (MRKKEGAAGTPRARPTSAGGLSLLPPPPGGKSST) and 245-266 (DFTKSTGSPSSQSQPGTGWVQF). S181 bears the Phosphoserine mark. 2 consecutive short sequence motifs (WXXF motif) follow at residues 243–246 (WGDF) and 263–266 (WVQF). The span at 249 to 266 (STGSPSSQSQPGTGWVQF) shows a compositional bias: low complexity.

This sequence belongs to the NECAP family. As to quaternary structure, interacts with AP1G1 and AP2A1 components of the adapter protein complexes AP-1 and AP-2. Interacts with the GAE domain proteins GGA1, GGA2 and GGA3. As to expression, expressed in brain, heart, kidney, liver, lung, skeletal muscles and testis (at protein level).

It is found in the cytoplasmic vesicle. The protein localises to the clathrin-coated vesicle membrane. Its subcellular location is the cell membrane. Involved in endocytosis. The polypeptide is Adaptin ear-binding coat-associated protein 2 (Necap2) (Mus musculus (Mouse)).